A 534-amino-acid chain; its full sequence is MSEVVAETARRRTFAIISHPDAGKTTLTEKLLLFGGAIQMAGSVKSRKAVRHATSDWMTLEKERGISVTSSVMQFPYEGKIINLLDTPGHADFGEDTYRVLTAVDSALMVIDVAKGVEERTIKLMEVCRLRDTPIMTFINKLDREGKNPIELLDEVERVLGIQCAPVTWPIGMGKRLRGVVNLLTNEVHLYEPGRNFTRQDSIIFTSLEAPGLAERIGEQMLADLHEELELIQGASACFDPTEYLGGRQTPVFFGSGVNNFGVQPLLDFFVEHAPSPQQRDTTSRVVLPTEEKLTGFVFKIQANMDPQHRDRVAFMRVCSGRFTAGMKAFHVRSSKDLKLANALTFMASDRESVAEAFPGDVIGIHNHGRVSIGDTFTEGEVLSFTGIPSFAPELFRRACLGDPLKLKQLQKGLTQLSEEGATQFFRPLMSNDLILGAVGMLQFDVVAYRLKNEYGVDATFEPVSITTARWVYCDNSKTLEEFREKNVTNLAVDASGELVYLAPTRVNLQLAQERAPEIHFFATREHAYAVGVD.

In terms of domain architecture, tr-type G spans 9–278; it reads ARRRTFAIIS…FFVEHAPSPQ (270 aa). Residues 18-25, 86-90, and 140-143 contribute to the GTP site; these read SHPDAGKT, DTPGH, and NKLD.

Belongs to the TRAFAC class translation factor GTPase superfamily. Classic translation factor GTPase family. PrfC subfamily.

The protein localises to the cytoplasm. In terms of biological role, increases the formation of ribosomal termination complexes and stimulates activities of RF-1 and RF-2. It binds guanine nucleotides and has strong preference for UGA stop codons. It may interact directly with the ribosome. The stimulation of RF-1 and RF-2 is significantly reduced by GTP and GDP, but not by GMP. In Xylella fastidiosa (strain M23), this protein is Peptide chain release factor 3.